We begin with the raw amino-acid sequence, 778 residues long: Tastin (778 aa).

Over residues M1 to L11 the composition is skewed to basic and acidic residues. Positions M1–P115 are disordered. S16, S98, and S170 each carry phosphoserine. The tract at residues I212 to Q244 is disordered. A compositionally biased stretch (polar residues) spans A235–Q244. Phosphoserine occurs at positions 324, 334, 344, and 362. T363 is subject to Phosphothreonine. S376 is subject to Phosphoserine. Disordered stretches follow at residues E406–P425, E508–R587, and P600–L641. A compositionally biased stretch (pro residues) spans Q513 to P523. 4 tandem repeats follow at residues P516–Y548, P549–C581, P582–C614, and P615–C647. A 4 X 33 AA approximate tandem repeats region spans residues P516–C647. The segment covering C560–Q574 has biased composition (basic and acidic residues). A compositionally biased stretch (pro residues) spans E612 to L622.

In terms of assembly, directly binds bystin, and indirectly trophinin. In terms of tissue distribution, strong expression at implantation sites. Was exclusively localized to the apical side of the syncytiotrophoblast. Also found in macrophages.

The protein resides in the cytoplasm. Its function is as follows. Could be involved with bystin and trophinin in a cell adhesion molecule complex that mediates an initial attachment of the blastocyst to uterine epithelial cells at the time of the embryo implantation. The protein is Tastin (TROAP) of Homo sapiens (Human).